The chain runs to 239 residues: Uridylate kinase (239 aa).

12–15 (KLSG) contributes to the ATP binding site. An involved in allosteric activation by GTP region spans residues 20 to 25 (GEKGFG). Gly54 provides a ligand contact to UMP. Residues Gly55 and Arg59 each coordinate ATP. Residues Asp72 and 133–140 (TGNPFFST) each bind UMP. Residues Tyr166 and Asp169 each contribute to the ATP site.

This sequence belongs to the UMP kinase family. In terms of assembly, homohexamer.

Its subcellular location is the cytoplasm. It catalyses the reaction UMP + ATP = UDP + ADP. It functions in the pathway pyrimidine metabolism; CTP biosynthesis via de novo pathway; UDP from UMP (UMPK route): step 1/1. Its activity is regulated as follows. Allosterically activated by GTP. Inhibited by UTP. Catalyzes the reversible phosphorylation of UMP to UDP. The polypeptide is Uridylate kinase (Caldicellulosiruptor saccharolyticus (strain ATCC 43494 / DSM 8903 / Tp8T 6331)).